Reading from the N-terminus, the 216-residue chain is Imidazole glycerol phosphate synthase subunit HisH (216 aa).

The Glutamine amidotransferase type-1 domain occupies Ser2 to Pro216. Catalysis depends on Cys88, which acts as the Nucleophile. Catalysis depends on residues His196 and Glu198.

In terms of assembly, heterodimer of HisH and HisF.

It localises to the cytoplasm. The enzyme catalyses 5-[(5-phospho-1-deoxy-D-ribulos-1-ylimino)methylamino]-1-(5-phospho-beta-D-ribosyl)imidazole-4-carboxamide + L-glutamine = D-erythro-1-(imidazol-4-yl)glycerol 3-phosphate + 5-amino-1-(5-phospho-beta-D-ribosyl)imidazole-4-carboxamide + L-glutamate + H(+). The catalysed reaction is L-glutamine + H2O = L-glutamate + NH4(+). Its pathway is amino-acid biosynthesis; L-histidine biosynthesis; L-histidine from 5-phospho-alpha-D-ribose 1-diphosphate: step 5/9. Its function is as follows. IGPS catalyzes the conversion of PRFAR and glutamine to IGP, AICAR and glutamate. The HisH subunit catalyzes the hydrolysis of glutamine to glutamate and ammonia as part of the synthesis of IGP and AICAR. The resulting ammonia molecule is channeled to the active site of HisF. The polypeptide is Imidazole glycerol phosphate synthase subunit HisH (Bradyrhizobium diazoefficiens (strain JCM 10833 / BCRC 13528 / IAM 13628 / NBRC 14792 / USDA 110)).